Consider the following 407-residue polypeptide: Argininosuccinate synthase (407 aa).

Residues 16–24 (AYSGGLDTS) and A44 each bind ATP. The L-citrulline site is built by Y96 and S101. Position 126 (G126) interacts with ATP. The L-aspartate site is built by T128, N132, and D133. An L-citrulline-binding site is contributed by N132. L-citrulline contacts are provided by R136, S185, S194, E270, and Y282.

This sequence belongs to the argininosuccinate synthase family. Type 1 subfamily. As to quaternary structure, homotetramer.

It localises to the cytoplasm. The catalysed reaction is L-citrulline + L-aspartate + ATP = 2-(N(omega)-L-arginino)succinate + AMP + diphosphate + H(+). The protein operates within amino-acid biosynthesis; L-arginine biosynthesis; L-arginine from L-ornithine and carbamoyl phosphate: step 2/3. This is Argininosuccinate synthase from Shewanella frigidimarina (strain NCIMB 400).